The following is a 200-amino-acid chain: Anthranilate synthase component 2 (200 aa).

The region spanning 3–196 (NILLLDNIDS…IHWASLKYIT (194 aa)) is the Glutamine amidotransferase type-1 domain. Residue 57–59 (GPS) coordinates L-glutamine. The Nucleophile; for GATase activity role is filled by cysteine 84. L-glutamine-binding positions include glutamine 88 and 134–135 (SL). Active-site for GATase activity residues include histidine 170 and glutamate 172.

Heterotetramer consisting of two non-identical subunits: a beta subunit (TrpG) and a large alpha subunit (TrpE).

It catalyses the reaction chorismate + L-glutamine = anthranilate + pyruvate + L-glutamate + H(+). It participates in amino-acid biosynthesis; L-tryptophan biosynthesis; L-tryptophan from chorismate: step 1/5. In terms of biological role, part of a heterotetrameric complex that catalyzes the two-step biosynthesis of anthranilate, an intermediate in the biosynthesis of L-tryptophan. In the first step, the glutamine-binding beta subunit (TrpG) of anthranilate synthase (AS) provides the glutamine amidotransferase activity which generates ammonia as a substrate that, along with chorismate, is used in the second step, catalyzed by the large alpha subunit of AS (TrpE) to produce anthranilate. In the absence of TrpG, TrpE can synthesize anthranilate directly from chorismate and high concentrations of ammonia. The polypeptide is Anthranilate synthase component 2 (trpG) (Buchnera aphidicola subsp. Acyrthosiphon pisum (strain APS) (Acyrthosiphon pisum symbiotic bacterium)).